The primary structure comprises 430 residues: Adenylosuccinate synthetase (430 aa).

Residues 12 to 18 (GDEGKGK) and 40 to 42 (GHT) each bind GTP. D13 (proton acceptor) is an active-site residue. The Mg(2+) site is built by D13 and G40. IMP contacts are provided by residues 13–16 (DEGK), 38–41 (NAGH), T128, R142, Q223, T238, and R302. Residue H41 is the Proton donor of the active site. 298 to 304 (TTTGRPR) provides a ligand contact to substrate. Residues R304, 330-332 (LLD), and 412-414 (SVG) each bind GTP.

It belongs to the adenylosuccinate synthetase family. Homodimer. It depends on Mg(2+) as a cofactor.

The protein localises to the cytoplasm. It catalyses the reaction IMP + L-aspartate + GTP = N(6)-(1,2-dicarboxyethyl)-AMP + GDP + phosphate + 2 H(+). The protein operates within purine metabolism; AMP biosynthesis via de novo pathway; AMP from IMP: step 1/2. Its function is as follows. Plays an important role in the de novo pathway of purine nucleotide biosynthesis. Catalyzes the first committed step in the biosynthesis of AMP from IMP. This is Adenylosuccinate synthetase from Listeria innocua serovar 6a (strain ATCC BAA-680 / CLIP 11262).